We begin with the raw amino-acid sequence, 172 residues long: Keratin-associated protein 13-1 (172 aa).

Repeat copies occupy residues 46 to 55 (CQLGSSLYRG), 56 to 65 (CQQTCWEPTS), 66 to 75 (CQTSYVESSP), 76 to 85 (CQTSCYRPRT), and 92 to 101 (CQTTYSGSLG). Positions 46–101 (CQLGSSLYRGCQQTCWEPTSCQTSYVESSPCQTSCYRPRTSLLCSPCQTTYSGSLG) are 5 X 10 AA approximate repeats.

It belongs to the PMG family. As to quaternary structure, interacts with hair keratins. In terms of tissue distribution, weak expression seen in the late matrix and entire cortex area of the hair follicle.

Functionally, in the hair cortex, hair keratin intermediate filaments are embedded in an interfilamentous matrix, consisting of hair keratin-associated proteins (KRTAP), which are essential for the formation of a rigid and resistant hair shaft through their extensive disulfide bond cross-linking with abundant cysteine residues of hair keratins. The matrix proteins include the high-sulfur and high-glycine-tyrosine keratins. The sequence is that of Keratin-associated protein 13-1 (KRTAP13-1) from Homo sapiens (Human).